The following is a 309-amino-acid chain: MTTPPVLSLALPSDTGRVLSIQSHTVQGYVGNKSAVFPLQLLGYDVDPINSVQFSNHTGYPTFKGQVLNGQQLCDLIEGLEANDLLFYTHVLTGYIGSVSFLDTILEVINKLRSVNPNLTYVCDPVMGDEGKLYVPEELVHVYREKVVPLASMLTPNQFEAEKLTGLRINSEEDGREACAILHAAGPSKVVITSITIGGILLLIGSHQKEKGLKPEQFKILIHKIPAYFTGTGDLMTALLLGWSNKYPDNLDKAAELAVSTLQALLRRTLDDYKRAGYDPTSSSLEIRLIQSQEDIRNPKVELKAERYS.

At threonine 2 the chain carries N-acetylthreonine; in Pyridoxal kinase, N-terminally processed. Residues serine 23 and threonine 58 each contribute to the pyridoxal site. Residue threonine 58 coordinates pyridoxal 5'-phosphate. Aspartate 124 contacts ATP. Residue aspartate 124 participates in Na(+) binding. Aspartate 129 is a binding site for Mg(2+). Residue threonine 155 participates in Na(+) binding. ATP is bound by residues 157–160 (NQFE), 193–194 (TS), 225–227 (IPA), and threonine 232. Position 193 (threonine 193) interacts with Na(+). 233–234 (GD) contacts pyridoxal 5'-phosphate. The Proton acceptor role is filled by aspartate 234.

This sequence belongs to the pyridoxine kinase family. As to quaternary structure, homodimer. It depends on Zn(2+) as a cofactor. As to expression, expressed ubiquitously in leaves, stems, roots, flowers and siliques. Present in root hairs and other tip-growing cells such as papillar cells on the top of stigma.

The catalysed reaction is pyridoxal + ATP = pyridoxal 5'-phosphate + ADP + H(+). Its pathway is cofactor metabolism; pyridoxal 5'-phosphate salvage; pyridoxal 5'-phosphate from pyridoxal: step 1/1. Catalyzes the transfer of a phosphate group from ATP to the 5-hydroxylmethyl group of pyridoxal to form the biologically active pyridoxal phosphate, an active form of vitamin B6. Required for Na(+) and K(+) homeostasis and for salt tolerance. Involved in root hair development, both for initiation and tip growth. The chain is Pyridoxal kinase from Arabidopsis thaliana (Mouse-ear cress).